The following is a 61-amino-acid chain: Sperm protamine P1 (61 aa).

Positions 1-61 (MARYRHSRSR…RRYHSHRRRY (61 aa)) are disordered.

It belongs to the protamine P1 family. As to expression, testis.

The protein resides in the nucleus. The protein localises to the chromosome. Protamines substitute for histones in the chromatin of sperm during the haploid phase of spermatogenesis. They compact sperm DNA into a highly condensed, stable and inactive complex. The chain is Sperm protamine P1 (PRM1) from Notoryctes typhlops (Southern marsupial mole).